Consider the following 356-residue polypeptide: Protein-glutamate methylesterase/protein-glutamine glutaminase 2 (356 aa).

In terms of domain architecture, Response regulatory spans 6–123 (KVLIVDDSAL…KQFLEESSIR (118 aa)). The residue at position 57 (Asp-57) is a 4-aspartylphosphate. The 192-residue stretch at 165 to 356 (VQRTEKVVVV…AAAIVKACNS (192 aa)) folds into the CheB-type methylesterase domain. Catalysis depends on residues Ser-177, His-203, and Asp-299.

This sequence belongs to the CheB family. Phosphorylated by CheA. Phosphorylation of the N-terminal regulatory domain activates the methylesterase activity.

Its subcellular location is the cytoplasm. It carries out the reaction [protein]-L-glutamate 5-O-methyl ester + H2O = L-glutamyl-[protein] + methanol + H(+). It catalyses the reaction L-glutaminyl-[protein] + H2O = L-glutamyl-[protein] + NH4(+). In terms of biological role, involved in chemotaxis. Part of a chemotaxis signal transduction system that modulates chemotaxis in response to various stimuli. Catalyzes the demethylation of specific methylglutamate residues introduced into the chemoreceptors (methyl-accepting chemotaxis proteins or MCP) by CheR. Also mediates the irreversible deamidation of specific glutamine residues to glutamic acid. This is Protein-glutamate methylesterase/protein-glutamine glutaminase 2 from Oleidesulfovibrio alaskensis (strain ATCC BAA-1058 / DSM 17464 / G20) (Desulfovibrio alaskensis).